The following is a 291-amino-acid chain: Ribosomal RNA small subunit methyltransferase H (291 aa).

Residues 31–33, Asp49, Phe76, Asp97, and Gln104 contribute to the S-adenosyl-L-methionine site; that span reads GGY.

It belongs to the methyltransferase superfamily. RsmH family.

The protein localises to the cytoplasm. It catalyses the reaction cytidine(1402) in 16S rRNA + S-adenosyl-L-methionine = N(4)-methylcytidine(1402) in 16S rRNA + S-adenosyl-L-homocysteine + H(+). Functionally, specifically methylates the N4 position of cytidine in position 1402 (C1402) of 16S rRNA. This Anaplasma marginale (strain Florida) protein is Ribosomal RNA small subunit methyltransferase H.